The primary structure comprises 354 residues: tRNA pseudouridine synthase D (354 aa).

The active-site Nucleophile is Asp86. In terms of domain architecture, TRUD spans 162–309; sequence GVPNYFGPQR…LEVGRRALRL (148 aa).

Belongs to the pseudouridine synthase TruD family.

It carries out the reaction uridine(13) in tRNA = pseudouridine(13) in tRNA. Functionally, responsible for synthesis of pseudouridine from uracil-13 in transfer RNAs. The sequence is that of tRNA pseudouridine synthase D from Methylococcus capsulatus (strain ATCC 33009 / NCIMB 11132 / Bath).